We begin with the raw amino-acid sequence, 69 residues long: Cytochrome c oxidase subunit 8A, mitochondrial (69 aa).

The N-terminal 25 residues, 1–25 (MSVLTSLLLRGLTGSARRLPVPRAK), are a transit peptide targeting the mitochondrion. The SIFI-degron signature appears at 2–19 (SVLTSLLLRGLTGSARRL). At 26-36 (VHSMPPEEELG) the chain is on the mitochondrial matrix side. The chain crosses the membrane as a helical span at residues 37–60 (TLEKAIALTSCFVSLFLPAGWILS). At 61 to 69 (HLEDYKRPE) the chain is on the mitochondrial intermembrane side.

This sequence belongs to the cytochrome c oxidase VIII family. In terms of assembly, component of the cytochrome c oxidase (complex IV, CIV), a multisubunit enzyme composed of 14 subunits. The complex is composed of a catalytic core of 3 subunits MT-CO1, MT-CO2 and MT-CO3, encoded in the mitochondrial DNA, and 11 supernumerary subunits COX4I, COX5A, COX5B, COX6A, COX6B, COX6C, COX7A, COX7B, COX7C, COX8 and NDUFA4, which are encoded in the nuclear genome. The complex exists as a monomer or a dimer and forms supercomplexes (SCs) in the inner mitochondrial membrane with NADH-ubiquinone oxidoreductase (complex I, CI) and ubiquinol-cytochrome c oxidoreductase (cytochrome b-c1 complex, complex III, CIII), resulting in different assemblies (supercomplex SCI(1)III(2)IV(1) and megacomplex MCI(2)III(2)IV(2)). In terms of processing, in response to mitochondrial stress, the precursor protein is ubiquitinated by the SIFI complex in the cytoplasm before mitochondrial import, leading to its degradation. Within the SIFI complex, UBR4 initiates ubiquitin chain that are further elongated or branched by KCMF1.

It localises to the mitochondrion inner membrane. The protein operates within energy metabolism; oxidative phosphorylation. Its function is as follows. Component of the cytochrome c oxidase, the last enzyme in the mitochondrial electron transport chain which drives oxidative phosphorylation. The respiratory chain contains 3 multisubunit complexes succinate dehydrogenase (complex II, CII), ubiquinol-cytochrome c oxidoreductase (cytochrome b-c1 complex, complex III, CIII) and cytochrome c oxidase (complex IV, CIV), that cooperate to transfer electrons derived from NADH and succinate to molecular oxygen, creating an electrochemical gradient over the inner membrane that drives transmembrane transport and the ATP synthase. Cytochrome c oxidase is the component of the respiratory chain that catalyzes the reduction of oxygen to water. Electrons originating from reduced cytochrome c in the intermembrane space (IMS) are transferred via the dinuclear copper A center (CU(A)) of subunit 2 and heme A of subunit 1 to the active site in subunit 1, a binuclear center (BNC) formed by heme A3 and copper B (CU(B)). The BNC reduces molecular oxygen to 2 water molecules using 4 electrons from cytochrome c in the IMS and 4 protons from the mitochondrial matrix. In Papio anubis (Olive baboon), this protein is Cytochrome c oxidase subunit 8A, mitochondrial (COX8A).